The chain runs to 502 residues: Probable cytosol aminopeptidase (502 aa).

Positions 269 and 274 each coordinate Mn(2+). K281 is an active-site residue. 3 residues coordinate Mn(2+): D292, D351, and E353. R355 is an active-site residue.

Belongs to the peptidase M17 family. The cofactor is Mn(2+).

Its subcellular location is the cytoplasm. The catalysed reaction is Release of an N-terminal amino acid, Xaa-|-Yaa-, in which Xaa is preferably Leu, but may be other amino acids including Pro although not Arg or Lys, and Yaa may be Pro. Amino acid amides and methyl esters are also readily hydrolyzed, but rates on arylamides are exceedingly low.. It carries out the reaction Release of an N-terminal amino acid, preferentially leucine, but not glutamic or aspartic acids.. Its function is as follows. Presumably involved in the processing and regular turnover of intracellular proteins. Catalyzes the removal of unsubstituted N-terminal amino acids from various peptides. The sequence is that of Probable cytosol aminopeptidase from Shewanella piezotolerans (strain WP3 / JCM 13877).